We begin with the raw amino-acid sequence, 229 residues long: Flagellar L-ring protein (229 aa).

The signal sequence occupies residues 1 to 25 (MKQVRLPSSATVRAACAVAVAALAG). Residue Cys26 is the site of N-palmitoyl cysteine attachment. Cys26 carries the S-diacylglycerol cysteine lipid modification.

The protein belongs to the FlgH family. The basal body constitutes a major portion of the flagellar organelle and consists of four rings (L,P,S, and M) mounted on a central rod.

It localises to the cell outer membrane. The protein localises to the bacterial flagellum basal body. Assembles around the rod to form the L-ring and probably protects the motor/basal body from shearing forces during rotation. This is Flagellar L-ring protein from Burkholderia orbicola (strain AU 1054).